The sequence spans 68 residues: Conotoxin TsMMSK-021 (68 aa).

Residues 1–20 (MMSKLGVLLTICLLLFPLTA) form the signal peptide. Positions 21–50 (VPLDGDQHADRPADRMQDISSEQHPLFDPV) are excised as a propeptide. Cystine bridges form between C53/C66, C54/C62, and C58/C65. Position 64 is a 4-hydroxyproline (P64).

Belongs to the conotoxin M superfamily. Expressed by the venom duct.

The protein resides in the secreted. The polypeptide is Conotoxin TsMMSK-021 (Conus tessulatus (Tessellate cone)).